The sequence spans 307 residues: Probable transposase for transposon Tn903 (307 aa).

Functionally, required for transposition of transposon Tn903. The sequence is that of Probable transposase for transposon Tn903 from Escherichia coli.